The chain runs to 55 residues: Metallothionein-1 (55 aa).

The protein belongs to the metallothionein superfamily. Type 11 family.

The protein is Metallothionein-1 (MTP1) of Yarrowia lipolytica (strain CLIB 122 / E 150) (Yeast).